A 203-amino-acid polypeptide reads, in one-letter code: uncharacterized protein (203 aa).

A signal peptide spans 1 to 20; that stretch reads MDELILPILILLFLVFVAYF.

This is an uncharacterized protein from Pasteurella multocida (strain Pm70).